Reading from the N-terminus, the 702-residue chain is Putative methyltransferase NSUN7 (702 aa).

Cysteine 424 acts as the Nucleophile in catalysis. 3 disordered regions span residues 522–541, 567–593, and 675–702; these read KSSKREKKKKKSKTSLTKAA, ETVTKPSLPQKNTAQVGASSQTRKHKL, and PTPSLSRKGEKPKDDTRSSLLRPPRRWL. Positions 523-534 are enriched in basic residues; that stretch reads SSKREKKKKKSK. Residues 567-587 show a composition bias toward polar residues; that stretch reads ETVTKPSLPQKNTAQVGASSQ. The span at 681–691 shows a compositional bias: basic and acidic residues; sequence RKGEKPKDDTR.

The protein belongs to the class I-like SAM-binding methyltransferase superfamily. RsmB/NOP family.

Its function is as follows. May have S-adenosyl-L-methionine-dependent methyl-transferase activity. This Macaca fascicularis (Crab-eating macaque) protein is Putative methyltransferase NSUN7 (NSUN7).